Here is a 362-residue protein sequence, read N- to C-terminus: MLKVGSSLLAADGGGLSPRFALGLAQFVSANLAAGRELVIVSSGAVAAGRAILPKAVDVGAPIAARQALAALGQAQLIALWQRFFERAVAQVLLTHDDLRNRRRYLNARATLGELLRLGALPVINENDTVSVDELKLGDNDNLAAIVAALVDADALFIATDIDGLYSADPRSNPLARPLDDVPELTPEVLAMAGGSGSNVGTGGMRTKLEAAAKAGAAGIETYLFNGRSGEVVRALAQDRLRGTRIHAARTRIAARKYWLRHAPVEAGAILVDAGAAMALSDKGASLLPGGVVGAEGDFRRGDMVEIRLRDDEGERCLARGVSQYSAVDIRRIARRHSRDIENVLGYSYGENVVHRDDLVLL.

Residue K3 coordinates ATP. Residues S43, D128, and N140 each coordinate substrate. ATP-binding positions include 160-161 (TD) and 202-208 (TGGMRTK). The PUA domain maps to 267-348 (AGAILVDAGA…RDIENVLGYS (82 aa)).

This sequence belongs to the glutamate 5-kinase family.

The protein localises to the cytoplasm. The enzyme catalyses L-glutamate + ATP = L-glutamyl 5-phosphate + ADP. It functions in the pathway amino-acid biosynthesis; L-proline biosynthesis; L-glutamate 5-semialdehyde from L-glutamate: step 1/2. Its function is as follows. Catalyzes the transfer of a phosphate group to glutamate to form L-glutamate 5-phosphate. This chain is Glutamate 5-kinase, found in Xanthomonas oryzae pv. oryzae (strain MAFF 311018).